The primary structure comprises 444 residues: Interferon-induced protein 44 (444 aa).

One can recognise a TLDc domain in the interval 1–152 (MAVTTRLTWL…IQDYEVFRCE (152 aa)).

This sequence belongs to the IFI44 family.

The protein localises to the cytoplasm. This protein aggregates to form microtubular structures. This Homo sapiens (Human) protein is Interferon-induced protein 44 (IFI44).